Reading from the N-terminus, the 301-residue chain is GTP cyclohydrolase FolE2 (301 aa).

It belongs to the GTP cyclohydrolase IV family.

It catalyses the reaction GTP + H2O = 7,8-dihydroneopterin 3'-triphosphate + formate + H(+). Its pathway is cofactor biosynthesis; 7,8-dihydroneopterin triphosphate biosynthesis; 7,8-dihydroneopterin triphosphate from GTP: step 1/1. Functionally, converts GTP to 7,8-dihydroneopterin triphosphate. The protein is GTP cyclohydrolase FolE2 of Exiguobacterium sibiricum (strain DSM 17290 / CCUG 55495 / CIP 109462 / JCM 13490 / 255-15).